Reading from the N-terminus, the 191-residue chain is Pyridoxal 5'-phosphate synthase subunit PdxT (191 aa).

An L-glutamine-binding site is contributed by 46–48 (GES). Residue C78 is the Nucleophile of the active site. L-glutamine is bound by residues R105 and 133-134 (IR). Residues H169 and E171 each act as charge relay system in the active site.

It belongs to the glutaminase PdxT/SNO family. In the presence of PdxS, forms a dodecamer of heterodimers. Only shows activity in the heterodimer.

The enzyme catalyses aldehydo-D-ribose 5-phosphate + D-glyceraldehyde 3-phosphate + L-glutamine = pyridoxal 5'-phosphate + L-glutamate + phosphate + 3 H2O + H(+). It carries out the reaction L-glutamine + H2O = L-glutamate + NH4(+). The protein operates within cofactor biosynthesis; pyridoxal 5'-phosphate biosynthesis. Functionally, catalyzes the hydrolysis of glutamine to glutamate and ammonia as part of the biosynthesis of pyridoxal 5'-phosphate. The resulting ammonia molecule is channeled to the active site of PdxS. The protein is Pyridoxal 5'-phosphate synthase subunit PdxT of Fervidobacterium nodosum (strain ATCC 35602 / DSM 5306 / Rt17-B1).